Consider the following 189-residue polypeptide: Phosphomevalonate kinase (189 aa).

Residues 10 to 16 (KRKCGKD) and Arg138 contribute to the ATP site. Asn168 is a substrate binding site.

The protein resides in the cytoplasm. Its subcellular location is the cytosol. It catalyses the reaction (R)-5-phosphomevalonate + ATP = (R)-5-diphosphomevalonate + ADP. It participates in isoprenoid biosynthesis; isopentenyl diphosphate biosynthesis via mevalonate pathway; isopentenyl diphosphate from (R)-mevalonate: step 2/3. This chain is Phosphomevalonate kinase, found in Drosophila melanogaster (Fruit fly).